The sequence spans 147 residues: uncharacterized protein (147 aa).

This is an uncharacterized protein from Escherichia coli (strain K12).